Reading from the N-terminus, the 295-residue chain is bZIP transcription factor 60 (295 aa).

The segment at 101–154 (PAAADDSGKENSDLVVEKKSNDSGSEIHDDDDEEGDDDAVAKKRRRRVRNRDAA) is disordered. Positions 106 to 127 (DSGKENSDLVVEKKSNDSGSEI) are enriched in basic and acidic residues. Residues 128–138 (HDDDDEEGDDD) are compositionally biased toward acidic residues. In terms of domain architecture, bZIP spans 140 to 203 (VAKKRRRRVR…QSLRYCLQKG (64 aa)). The tract at residues 142 to 162 (KKRRRRVRNRDAAVRSRERKK) is basic motif. The segment at 168-182 (LEKKSKYLERECLRL) is leucine-zipper. A helical transmembrane segment spans residues 224-244 (LLLGSLLWLLGVNFICLFPYM).

It belongs to the bZIP family. As to quaternary structure, interacts with BZIP28. As to expression, expressed in seedlings, rosette and cauline leaves, stems, buds, flowers, siliques, immature seeds, anthers and pollen grains.

It localises to the endoplasmic reticulum membrane. It is found in the nucleus. Its function is as follows. Transcription factor involved in the unfolded protein response (UPR). Acts during endoplasmic reticulum stress (ER) by activating unfolded protein response (UPR) target genes via direct binding to the UPR element (UPRE). Plays a role in plant immunity and abiotic stress responses. This chain is bZIP transcription factor 60, found in Arabidopsis thaliana (Mouse-ear cress).